Here is a 102-residue protein sequence, read N- to C-terminus: Small ribosomal subunit protein uS10 (102 aa).

Belongs to the universal ribosomal protein uS10 family. In terms of assembly, part of the 30S ribosomal subunit.

Functionally, involved in the binding of tRNA to the ribosomes. The sequence is that of Small ribosomal subunit protein uS10 from Parafrankia sp. (strain EAN1pec).